Consider the following 587-residue polypeptide: Beta-(1--&gt;2)glucan export ATP-binding/permease protein NdvA (587 aa).

The ABC transmembrane type-1 domain maps to 21 to 301; sequence VSLVVIANIV…MRQFATQIFE (281 aa). 6 consecutive transmembrane segments (helical) span residues 23 to 43, 57 to 77, 126 to 146, 158 to 178, 248 to 268, and 272 to 292; these read LVVIANIVLATITIAEPILFG, PILFMWAAFAVFNTVAFVLVS, LFGLWLEFMRNHLSTVIALAL, LSAVLIVLGIAYWLIGRVVMS, MASTIAMMVVLIIGTMLVQSG, and IGDVIAFIGFANLLIARLDLM. The 235-residue stretch at 335-569 folds into the ABC transporter domain; that stretch reads IEFRDVSFGF…NGRFAALLRA (235 aa). ATP is bound at residue 368–375; it reads GPTGAGKT.

It belongs to the ABC transporter superfamily. Beta-(1--&gt;2)glucan exporter (TC 3.A.1.108.1) family. As to quaternary structure, homodimer.

It localises to the cell inner membrane. It catalyses the reaction [(1-&gt;2)-beta-D-glucosyl](n)(in) + ATP + H2O = [(1-&gt;2)-beta-D-glucosyl](n)(out) + ADP + phosphate + H(+). In terms of biological role, involved in beta-(1--&gt;2)glucan export. Transmembrane domains (TMD) form a pore in the inner membrane and the ATP-binding domain (NBD) is responsible for energy generation. The polypeptide is Beta-(1--&gt;2)glucan export ATP-binding/permease protein NdvA (Rhizobium etli (strain ATCC 51251 / DSM 11541 / JCM 21823 / NBRC 15573 / CFN 42)).